Consider the following 525-residue polypeptide: Coronin-2A (525 aa).

WD repeat units follow at residues 24–71 (NCYD…TGKL), 72–122 (DPHY…RNLT), 123–170 (AYRK…SVIT), 171–214 (SPMS…AGTV), 215–259 (LQEA…DNLS), 260–305 (VPLM…ADKP), and 306–342 (HLSY…RFYK). Residues 485-524 (QMFYRQQEEIRRLRELLTQREVQAKQLELEIKNLRMGSEQ) adopt a coiled-coil conformation.

This sequence belongs to the WD repeat coronin family. As to quaternary structure, binds actin. Component of the N-Cor repressor complex, at least composed of NCOR1, NCOR2, HDAC3, TBL1X, TBL1R, CORO2A and GPS2.

This is Coronin-2A (CORO2A) from Homo sapiens (Human).